The chain runs to 128 residues: Lymphocyte antigen 6 complex locus protein G5c (128 aa).

The first 29 residues, Met1–Val29, serve as a signal peptide directing secretion. One can recognise a UPAR/Ly6 domain in the interval Leu37–Pro128. Disulfide bonds link Cys39–Cys66, Cys42–Cys51, Cys58–Cys85, Cys94–Cys111, and Cys112–Cys117. Residue Asn73 is glycosylated (N-linked (GlcNAc...) asparagine).

Forms oligomers. N-glycosylated. Abundantly expressed in the epididymis.

It is found in the secreted. In terms of biological role, may have a role in hematopoietic cell differentiation. The protein is Lymphocyte antigen 6 complex locus protein G5c (LY6G5C) of Canis lupus familiaris (Dog).